The sequence spans 393 residues: Zinc finger CCCH domain-containing protein 2 (393 aa).

Residues 1–71 are disordered; that stretch reads MDVVCTEHQM…NRENKEYCYD (71 aa). The span at 20 to 37 shows a compositional bias: low complexity; it reads RKLLLSSKSFPSDSSSPR. Residues 60–69 show a composition bias toward basic and acidic residues; that stretch reads DNNRENKEYC. C3H1-type zinc fingers lie at residues 122 to 150 and 159 to 181; these read QYSG…HGVF and YRTE…AHSP.

As to quaternary structure, interacts with MARD1/FLZ9 and RD21A. As to expression, specifically expressed in seeds.

The protein localises to the nucleus. In terms of biological role, probable transcription repressor that functions as a negative regulator of phytochrome-mediated promotion of seed germination. Inhibits seed germination by regulating the expression of gibberellic acid (GA) and abscisic acid (ABA) metabolic genes. Does not regulate the expression of the DELLA genes RGA and RGA1. Activated by PIL5, a phytochrome-interacting basic helix-loop-helix transcription factor. Represses directly JMJ20 and JMJ22 expression in the absence of red light (R) and in far-red (FR) conditions. This is Zinc finger CCCH domain-containing protein 2 from Arabidopsis thaliana (Mouse-ear cress).